We begin with the raw amino-acid sequence, 168 residues long: SPbeta prophage-derived uncharacterized protein YomW (168 aa).

In Bacillus subtilis (strain 168), this protein is SPbeta prophage-derived uncharacterized protein YomW (yomW).